The chain runs to 377 residues: Endoplasmic reticulum-Golgi intermediate compartment protein 2 (377 aa).

The Cytoplasmic portion of the chain corresponds to 1 to 33 (MRRLNRKKTLSLVKELDAFPKVPESYVETSASG). The chain crosses the membrane as a helical span at residues 34-54 (GTVSLIAFTTMALLTIMEFSV). The Lumenal segment spans residues 55–319 (YQDTWMKYEY…PFWQFFVRLC (265 aa)). Residues 320-340 (GIVGGIFSTTGMLHGIGKFIV) form a helical membrane-spanning segment. At 341 to 377 (EIICCRFRLGSYKPVNSVPFEDGHTDNHLPLLENNTH) the chain is on the cytoplasmic side.

This sequence belongs to the ERGIC family. In terms of assembly, may form a heteromeric complex composed of ERGIC1, ERGIC2 and ERGIC3. Interacts with ERGIC3, the interaction is required for the stable expression of both proteins. May interact with EEF1A1.

It is found in the endoplasmic reticulum-Golgi intermediate compartment membrane. Its subcellular location is the golgi apparatus. The protein resides in the cis-Golgi network membrane. The protein localises to the endoplasmic reticulum membrane. It localises to the cytoplasm. It is found in the nucleus. Possible role in transport between endoplasmic reticulum and Golgi. This is Endoplasmic reticulum-Golgi intermediate compartment protein 2 (ERGIC2) from Macaca fascicularis (Crab-eating macaque).